Consider the following 262-residue polypeptide: Ribosomal RNA small subunit methyltransferase A (262 aa).

S-adenosyl-L-methionine is bound by residues asparagine 13, leucine 15, glycine 40, glutamate 61, aspartate 85, and asparagine 104.

The protein belongs to the class I-like SAM-binding methyltransferase superfamily. rRNA adenine N(6)-methyltransferase family. RsmA subfamily.

Its subcellular location is the cytoplasm. It catalyses the reaction adenosine(1518)/adenosine(1519) in 16S rRNA + 4 S-adenosyl-L-methionine = N(6)-dimethyladenosine(1518)/N(6)-dimethyladenosine(1519) in 16S rRNA + 4 S-adenosyl-L-homocysteine + 4 H(+). Specifically dimethylates two adjacent adenosines (A1518 and A1519) in the loop of a conserved hairpin near the 3'-end of 16S rRNA in the 30S particle. May play a critical role in biogenesis of 30S subunits. In Chromobacterium violaceum (strain ATCC 12472 / DSM 30191 / JCM 1249 / CCUG 213 / NBRC 12614 / NCIMB 9131 / NCTC 9757 / MK), this protein is Ribosomal RNA small subunit methyltransferase A.